The chain runs to 179 residues: Small ribosomal subunit protein uS7 (179 aa).

This sequence belongs to the universal ribosomal protein uS7 family. As to quaternary structure, part of the 30S ribosomal subunit. Contacts proteins S9 and S11.

In terms of biological role, one of the primary rRNA binding proteins, it binds directly to 16S rRNA where it nucleates assembly of the head domain of the 30S subunit. Is located at the subunit interface close to the decoding center, probably blocks exit of the E-site tRNA. In Shigella flexneri serotype 5b (strain 8401), this protein is Small ribosomal subunit protein uS7.